The sequence spans 108 residues: Translation initiation factor 1A (108 aa).

An S1-like domain is found at 11–85 (PSRDVPKPEE…NRCDILYKYG (75 aa)).

Belongs to the eIF-1A family.

Seems to be required for maximal rate of protein biosynthesis. Enhances ribosome dissociation into subunits and stabilizes the binding of the initiator Met-tRNA(I) to 40 S ribosomal subunits. This Saccharolobus islandicus (strain Y.N.15.51 / Yellowstone #2) (Sulfolobus islandicus) protein is Translation initiation factor 1A (eIF1A).